The following is a 509-amino-acid chain: MNEQQRLASQQVNSSTKKEEKDYSKYFESVYQPPSLKDAKKRGKEEVKIERDFGLPEEFRNFGTGRKFYIRTYGCQMNEHDTEVMAGIFTALGYEPTFSTEEADVVLLNTCAIRENAENKVFGELGHLKALKRRNPDLLIGVCGCMSQEESVVNKIMQKNQHVDMVFGTHNIHRLPYILKDAMFSKETVVEVWSKEGDVIENLPKVRRGDIKAWVNIMYGCDKFCTYCIVPYTRGKERSRRPEDIIQEIRHLAANGYKEITLLGQNVNAYGKDFEDIEYGLGDLMDELRKVDIARIRFTTSHPRDFDDHLIEVLGKGGNLVEHIHLPVQSGSTEMLKIMARKYSREHYLELVRKIKEAIPNAVLTTDIIVGFPNETDEQFEETMSLYREVGFDTAFTFIYSPREGTPAAKMKDNVPMEVKKERLQRLNALVNKLAIEKNNRYKGQIVEVLVDGESKNNPEVLAGYTRTNKLVNFVAPKSLIGQLVKVKVTDAKTWSLNGELVEEPIEVE.

The segment covering 1 to 15 (MNEQQRLASQQVNSS) has biased composition (polar residues). The disordered stretch occupies residues 1–26 (MNEQQRLASQQVNSSTKKEEKDYSKY). Residues 16–25 (TKKEEKDYSK) are compositionally biased toward basic and acidic residues. Positions 66–184 (RKFYIRTYGC…LPYILKDAMF (119 aa)) constitute an MTTase N-terminal domain. 6 residues coordinate [4Fe-4S] cluster: Cys-75, Cys-111, Cys-145, Cys-221, Cys-225, and Cys-228. The region spanning 207 to 437 (RRGDIKAWVN…NALVNKLAIE (231 aa)) is the Radical SAM core domain. The TRAM domain maps to 440–503 (NRYKGQIVEV…TWSLNGELVE (64 aa)).

It belongs to the methylthiotransferase family. MiaB subfamily. In terms of assembly, monomer. [4Fe-4S] cluster is required as a cofactor.

Its subcellular location is the cytoplasm. The catalysed reaction is N(6)-dimethylallyladenosine(37) in tRNA + (sulfur carrier)-SH + AH2 + 2 S-adenosyl-L-methionine = 2-methylsulfanyl-N(6)-dimethylallyladenosine(37) in tRNA + (sulfur carrier)-H + 5'-deoxyadenosine + L-methionine + A + S-adenosyl-L-homocysteine + 2 H(+). Catalyzes the methylthiolation of N6-(dimethylallyl)adenosine (i(6)A), leading to the formation of 2-methylthio-N6-(dimethylallyl)adenosine (ms(2)i(6)A) at position 37 in tRNAs that read codons beginning with uridine. This chain is tRNA-2-methylthio-N(6)-dimethylallyladenosine synthase, found in Bacillus cereus (strain AH187).